We begin with the raw amino-acid sequence, 530 residues long: Glucocorticoid modulatory element-binding protein 2 (530 aa).

The SAND domain maps to 81-163 (EEGENLEAEI…RKIMDSGELD (83 aa)). Residue Cys-110 participates in Zn(2+) binding. Lys-136, Lys-140, Lys-143, and Arg-154 together coordinate DNA. Residue Lys-155 forms a Glycyl lysine isopeptide (Lys-Gly) (interchain with G-Cter in SUMO1); alternate linkage. Lys-155 is covalently cross-linked (Glycyl lysine isopeptide (Lys-Gly) (interchain with G-Cter in SUMO2); alternate). Residues His-167, Cys-171, and Cys-175 each contribute to the Zn(2+) site. Coiled-coil stretches lie at residues 245-270 (LLDEVIQEFQQELEETMKGLQQRVQD) and 304-344 (QMDR…SNVL). Ser-373 bears the Phosphoserine mark.

Homodimer, and heterodimer of GMEB1 and GMEB2. Interacts with the glucocorticoid receptor (NR3C1). May interact with CREB-binding protein (CBP).

The protein resides in the nucleus. It localises to the cytoplasm. Trans-acting factor that binds to glucocorticoid modulatory elements (GME) present in the TAT (tyrosine aminotransferase) promoter and increases sensitivity to low concentrations of glucocorticoids. Also binds to the transferrin receptor promoter. In Mus musculus (Mouse), this protein is Glucocorticoid modulatory element-binding protein 2 (Gmeb2).